Here is a 410-residue protein sequence, read N- to C-terminus: Auxin-induced protein 5NG4 (410 aa).

Over 1–16 (MASNIMQRCNVFMSER) the chain is Cytoplasmic. Residues 17-37 (VKLHAAMLALQFGYAGFHIVS) form a helical membrane-spanning segment. The Extracellular portion of the chain corresponds to 38 to 47 (RAALNMGVSK). Residues 48–68 (VVFPVYRNILALMLIGPCAYF) traverse the membrane as a helical segment. The Cytoplasmic segment spans residues 69 to 74 (LEKKER). A helical transmembrane segment spans residues 75 to 95 (PALTLSFLIQFFLLALCGITG). Topologically, residues 96–109 (QSRILSLRIVLHIP) are extracellular. A helical transmembrane segment spans residues 110 to 130 (TFASAIQNSVPAITFIMAAAL). Topologically, residues 131-141 (RLEKVHISRRD) are cytoplasmic. A helical transmembrane segment spans residues 142–162 (GLAKIIGTVACVSGATIITLY). Over 163–196 (KGPPITHIWRPNLEVTASYFKAFQGNDLSAKSEN) the chain is Extracellular. Asn-196 carries N-linked (GlcNAc...) asparagine glycosylation. The helical transmembrane segment at 197–217 (WTLGCIYLLGNCLAWSGWIVL) threads the bilayer. The EamA domain occupies 209–338 (LAWSGWIVLQ…IIIGLYLVLW (130 aa)). Over 218–229 (QAPVLKRYPARL) the chain is Cytoplasmic. A helical membrane pass occupies residues 230 to 250 (SVTSFTCFFGVIQFLIIAAFF). At 251 to 264 (ETDLEHWKIHSGGE) the chain is on the extracellular side. The helical transmembrane segment at 265 to 285 (LFTILYAGFVASGIAFSVQIW) threads the bilayer. Residues 286-292 (CIDRGGP) are Cytoplasmic-facing. The chain crosses the membrane as a helical span at residues 293 to 313 (VFVAVYQPVQTIAVAIMASII). Over 314–317 (LGEQ) the chain is Extracellular. A helical membrane pass occupies residues 318 to 338 (FYLGGIFGAILIIIGLYLVLW). Topologically, residues 339 to 410 (GKSEEKRLGL…IPSPSDEPQP (72 aa)) are cytoplasmic.

The protein belongs to the drug/metabolite transporter (DMT) superfamily. Plant drug/metabolite exporter (P-DME) (TC 2.A.7.4) family.

Its subcellular location is the membrane. The chain is Auxin-induced protein 5NG4 from Pinus taeda (Loblolly pine).